A 154-amino-acid polypeptide reads, in one-letter code: Putative NADPH-dependent 7-cyano-7-deazaguanine reductase (154 aa).

The active-site Proton donor is the aspartate 52. Residues valine 67–serine 69 and histidine 86–glutamate 87 each bind substrate.

It belongs to the GTP cyclohydrolase I family. QueF type 1 subfamily.

Its subcellular location is the cytoplasm. The enzyme catalyses 7-aminomethyl-7-carbaguanine + 2 NADP(+) = 7-cyano-7-deazaguanine + 2 NADPH + 3 H(+). Its pathway is tRNA modification; tRNA-queuosine biosynthesis. Functionally, catalyzes the NADPH-dependent reduction of 7-cyano-7-deazaguanine (preQ0) to 7-aminomethyl-7-deazaguanine (preQ1). In Streptococcus pneumoniae (strain ATCC BAA-255 / R6), this protein is Putative NADPH-dependent 7-cyano-7-deazaguanine reductase.